A 241-amino-acid polypeptide reads, in one-letter code: MSRVALVTGGSRGIGAAISIALKAAGYKVAASYAGNDDAAKPFKAETGIAVYKWDVSSYEACVEGIAKVEADLGPIDVLVNNAGITKDAMFHKMTPDQWNAVINTNLTGLFNMTHPVWSGMRDRSFGRIVNISSINGQKGQMGQANYSAAKAGDLGFTKALAQEGAAKGITVNAICPGYIGTEMVRAIPEKVLNERIIPQIPVGRLGEPDEIARIVVFLASDEAGFITGSTISANGGQFFV.

Residues 12–14 and 82–86 each bind NADP(+); these read RGI and NAGIT. Residues Asp-88 and 141 to 144 contribute to the substrate site; that span reads QMGQ. Residue Tyr-147 is the Proton acceptor of the active site. 177-180 contacts NADP(+); it reads PGYI. 178–179 provides a ligand contact to substrate; that stretch reads GY.

Belongs to the short-chain dehydrogenases/reductases (SDR) family.

Its subcellular location is the cytoplasm. It carries out the reaction a (3R)-3-hydroxyacyl-CoA + NADP(+) = a 3-oxoacyl-CoA + NADPH + H(+). Its pathway is biopolymer metabolism; poly-(R)-3-hydroxybutanoate biosynthesis. The chain is Acetoacetyl-CoA reductase from Shinella zoogloeoides (Crabtreella saccharophila).